Reading from the N-terminus, the 364-residue chain is Autophagy-related protein 14 (364 aa).

A cysteine repeats region spans residues 5 to 20 (CPICETQSHVFYCAHC). Residues 38-114 (LGKINNALRN…QDRRIKEKSR (77 aa)) are a coiled coil.

This sequence belongs to the ATG14 family. In terms of assembly, component of the autophagy-specific VPS34 PI3-kinase complex I composed of VPS15, VPS30, VPS34, ATG14 and ATG38. Interacts directly with ATG38.

Its subcellular location is the preautophagosomal structure membrane. It is found in the vacuole membrane. Functionally, required for cytoplasm to vacuole transport (Cvt) and autophagy as a part of the autophagy-specific VPS34 PI3-kinase complex I. This complex is essential to recruit the ATG8-phosphatidylinositol conjugate and the ATG12-ATG5 conjugate to the pre-autophagosomal structure. ATG14 mediates the specific binding of the VPS34 PI3-kinase complex I to the preautophagosomal structure (PAS). Required for survival and/or proliferation in kidneys and in brain. The protein is Autophagy-related protein 14 of Candida glabrata (strain ATCC 2001 / BCRC 20586 / JCM 3761 / NBRC 0622 / NRRL Y-65 / CBS 138) (Yeast).